The following is a 367-amino-acid chain: 3-isopropylmalate dehydrogenase (367 aa).

77–90 serves as a coordination point for NAD(+); sequence GPKYDDLDFSVKPE. Residues Arg-97, Arg-107, Arg-135, and Asp-224 each contribute to the substrate site. Residues Asp-224, Asp-248, and Asp-252 each coordinate Mg(2+). 287-299 contacts NAD(+); that stretch reads GSAPDIAGQGKAN.

The protein belongs to the isocitrate and isopropylmalate dehydrogenases family. LeuB type 1 subfamily. As to quaternary structure, homodimer. Mg(2+) serves as cofactor. Requires Mn(2+) as cofactor.

It localises to the cytoplasm. The enzyme catalyses (2R,3S)-3-isopropylmalate + NAD(+) = 4-methyl-2-oxopentanoate + CO2 + NADH. Its pathway is amino-acid biosynthesis; L-leucine biosynthesis; L-leucine from 3-methyl-2-oxobutanoate: step 3/4. Catalyzes the oxidation of 3-carboxy-2-hydroxy-4-methylpentanoate (3-isopropylmalate) to 3-carboxy-4-methyl-2-oxopentanoate. The product decarboxylates to 4-methyl-2 oxopentanoate. This Ruegeria pomeroyi (strain ATCC 700808 / DSM 15171 / DSS-3) (Silicibacter pomeroyi) protein is 3-isopropylmalate dehydrogenase.